Consider the following 172-residue polypeptide: 3-hydroxydecanoyl-[acyl-carrier-protein] dehydratase (172 aa).

Residue histidine 71 is part of the active site.

This sequence belongs to the thioester dehydratase family. FabA subfamily. Homodimer.

It localises to the cytoplasm. The catalysed reaction is a (3R)-hydroxyacyl-[ACP] = a (2E)-enoyl-[ACP] + H2O. The enzyme catalyses (3R)-hydroxydecanoyl-[ACP] = (2E)-decenoyl-[ACP] + H2O. It carries out the reaction (2E)-decenoyl-[ACP] = (3Z)-decenoyl-[ACP]. The protein operates within lipid metabolism; fatty acid biosynthesis. In terms of biological role, necessary for the introduction of cis unsaturation into fatty acids. Catalyzes the dehydration of (3R)-3-hydroxydecanoyl-ACP to E-(2)-decenoyl-ACP and then its isomerization to Z-(3)-decenoyl-ACP. Can catalyze the dehydratase reaction for beta-hydroxyacyl-ACPs with saturated chain lengths up to 16:0, being most active on intermediate chain length. The chain is 3-hydroxydecanoyl-[acyl-carrier-protein] dehydratase from Edwardsiella ictaluri (strain 93-146).